The chain runs to 574 residues: Protein OBERON 2 (574 aa).

Composition is skewed to polar residues over residues M1 to P10 and S65 to E76. The interval M1 to E76 is disordered. The PHD-type zinc finger occupies L226–T291. The stretch at K416–N524 forms a coiled coil.

As to quaternary structure, self-interacts. Interacts with OBE1, OBE3 and OBE4. Binds to VPg of pea seed borne mosaic virus (PSbMV), turnip mosaic virus (TuMV) and lettuce mosaic virus (LMV), but not with VPg of tobacco etch virus (TEV), cowpea mosaic virus (CPMV), tomato black ring virus (TBRV) and grapevine fan leaf virus (GFLV). In terms of tissue distribution, expressed in roots, seedlings, stems, leaves, flowers and siliques, especially in the vasculature.

Its subcellular location is the nucleus. Probable transcription factor that acts together with OBE1 for the maintenance and/or establishment of both the shoot and root meristems, probably by controlling the expression of the meristem genes such as WUS, PLT1 and PLT2 and of genes required for auxin responses. Promotes cell meristematic activity via the WUSCHEL-CLAVATA pathway. Involved in the development of the basal pole and in auxin-mediated root and vascular development in the embryo. Confers sensitivity to turnip mosaic virus (TuMV) probably by promoting viral movement and multiplication via interaction with TuMV VPg. This Arabidopsis thaliana (Mouse-ear cress) protein is Protein OBERON 2.